We begin with the raw amino-acid sequence, 481 residues long: ADAMTS-like protein 5 (481 aa).

A signal peptide spans 1–42 (MGKLRPGRVEWLASGHTERPHLFQNLLLFLWALLNCGLGVSA). The TSP type-1 domain maps to 45–97 (PGEWTPWVSWTRCSSSCGRGVSVRSRRCLRLPGEEPCWGDSHEYRLCQLPDCP). 3 cysteine pairs are disulfide-bonded: Cys57-Cys91, Cys61-Cys96, and Cys72-Cys81. Residue Asn218 is glycosylated (N-linked (GlcNAc...) asparagine). The segment at 331-361 (QPQPRGVEPQPPAAPAVTPAQTPTLAPDPCP) is disordered. Over residues 345-355 (PAVTPAQTPTL) the composition is skewed to low complexity. 3 cysteine pairs are disulfide-bonded: Cys360–Cys425, Cys363–Cys427, and Cys377–Cys479. Residues 360 to 479 (CPPCPDTRGR…SRIRLTARRC (120 aa)) enclose the NTR domain.

As to quaternary structure, interacts with heparin, FBN1 and FBN2. Proteolytically cleaved to release a C-terminal fragment containing the NTR domain. In terms of processing, contains at least one additional N-linked glycosylation site.

It localises to the secreted. Its subcellular location is the extracellular space. The protein resides in the extracellular matrix. Its function is as follows. May play a role in modulation of fibrillin microfibrils in the extracellular matrix (ECM). This chain is ADAMTS-like protein 5 (ADAMTSL5), found in Homo sapiens (Human).